The chain runs to 278 residues: Large ribosomal subunit protein uL2 (278 aa).

3 disordered regions span residues 1-20 (MAIR…SVSD), 25-57 (TRST…RGGG), and 224-278 (VVMN…GKKR). Composition is skewed to basic residues over residues 45-57 (AHGR…RGGG) and 269-278 (VRRRKTGKKR).

This sequence belongs to the universal ribosomal protein uL2 family. As to quaternary structure, part of the 50S ribosomal subunit. Forms a bridge to the 30S subunit in the 70S ribosome.

Its function is as follows. One of the primary rRNA binding proteins. Required for association of the 30S and 50S subunits to form the 70S ribosome, for tRNA binding and peptide bond formation. It has been suggested to have peptidyltransferase activity; this is somewhat controversial. Makes several contacts with the 16S rRNA in the 70S ribosome. This chain is Large ribosomal subunit protein uL2, found in Nocardia farcinica (strain IFM 10152).